Consider the following 271-residue polypeptide: Tryptophan synthase alpha chain (271 aa).

Active-site proton acceptor residues include glutamate 56 and aspartate 67.

Belongs to the TrpA family. In terms of assembly, tetramer of two alpha and two beta chains.

The catalysed reaction is (1S,2R)-1-C-(indol-3-yl)glycerol 3-phosphate + L-serine = D-glyceraldehyde 3-phosphate + L-tryptophan + H2O. It functions in the pathway amino-acid biosynthesis; L-tryptophan biosynthesis; L-tryptophan from chorismate: step 5/5. Its function is as follows. The alpha subunit is responsible for the aldol cleavage of indoleglycerol phosphate to indole and glyceraldehyde 3-phosphate. In Mycobacterium avium (strain 104), this protein is Tryptophan synthase alpha chain.